The sequence spans 267 residues: tRNA (guanine-N(1)-)-methyltransferase (267 aa).

S-adenosyl-L-methionine is bound by residues G112 and 131–136 (IGDYIL). Residues 245-259 (DRRKEKNSYEDEFNR) show a composition bias toward basic and acidic residues. Residues 245 to 267 (DRRKEKNSYEDEFNRRNYKRSTS) are disordered.

It belongs to the RNA methyltransferase TrmD family. In terms of assembly, homodimer.

It is found in the cytoplasm. It catalyses the reaction guanosine(37) in tRNA + S-adenosyl-L-methionine = N(1)-methylguanosine(37) in tRNA + S-adenosyl-L-homocysteine + H(+). Functionally, specifically methylates guanosine-37 in various tRNAs. The polypeptide is tRNA (guanine-N(1)-)-methyltransferase (Spiroplasma kunkelii).